Here is a 398-residue protein sequence, read N- to C-terminus: MRSTTLLALLALVLLYLVSGALVFQALEQPHEQQAQKKMDHGRDQFLRDHPCVSQKSLEDFIKLLVEALGGGANPETSWTNSSNHSSAWNLGSAFFFSGTIITTIGYGNIVLHTDAGRLFCIFYALVGIPLFGMLLAGVGDRLGSSLRRGIGHIEAIFLKWHVPPGLVRSLSAVLFLLIGCLLFVLTPTFVFSYMESWSKLEAIYFVIVTLTTVGFGDYVPGDGTGQNSPAYQPLVWFWILFGLAYFASVLTTIGNWLRAVSRRTRAEMGGLTAQAASWTGTVTARVTQRTGPSAPPPEKEQPLLPSSLPAPPAVVEPAGRPGSPAPAEKVETPSPPTASALDYPSENLAFIDESSDTQSERGCALPRAPRGRRRPNPSKKPSRPRGPGRLRDKAVPV.

At Met1–Ser3 the chain is on the cytoplasmic side. Residues Thr4 to Phe24 traverse the membrane as a helical segment. Over Gln25–Ala88 the chain is Extracellular. Residues Asn81 and Asn84 are each glycosylated (N-linked (GlcNAc...) asparagine). The helical intramembrane region spans Trp89–Thr103. Thr104, Ile105, Gly106, and Tyr107 together coordinate K(+). Positions Thr104–Asn109 are selectivity filter 1. Residues Thr104–Ile110 lie within the membrane without spanning it. The Extracellular segment spans residues Val111–Arg118. A helical transmembrane segment spans residues Leu119 to Ile151. At Gly152–Ala173 the chain is on the cytoplasmic side. The chain crosses the membrane as a helical span at residues Val174–Met195. Topologically, residues Glu196–Lys200 are extracellular. Positions Leu201–Val214 form an intramembrane region, helical. K(+) is bound by residues Thr213, Val214, Gly215, and Phe216. Residues Thr213–Asp218 are selectivity filter 2. An intramembrane segment occupies Gly215–Val220. Over Pro221–Pro234 the chain is Extracellular. The helical transmembrane segment at Leu235–Val261 threads the bilayer. At Ser262–Val398 the chain is on the cytoplasmic side. Positions Thr282–Gly292 are enriched in polar residues. The segment at Thr282–Val398 is disordered. Positions Pro370–Gly389 are enriched in basic residues.

This sequence belongs to the two pore domain potassium channel (TC 1.A.1.8) family. Homodimer; disulfide-linked. Forms heterodimers with other 2-pore domain K(+) channel subunits, such as KCNK2 and KCNK10. In terms of processing, N-glycosylated. In terms of tissue distribution, expressed in brain, spinal cord and eye. Not detected in heart, skeletal muscle, liver, lungs, kidney and testis.

Its subcellular location is the cell membrane. The protein resides in the cell projection. It localises to the axon. The enzyme catalyses K(+)(in) = K(+)(out). It catalyses the reaction Rb(+)(in) = Rb(+)(out). The catalysed reaction is Cs(+)(in) = Cs(+)(out). Its activity is regulated as follows. Activated by arachidonic acid and other polyunsaturated fatty acids. Not affected by volatile general anesthetics such as chloroform, diethyl ether, halothane and isoflurane. Activated at intracellular and extracellular basic pHs. Its function is as follows. K(+) channel that conducts voltage-dependent outward rectifying currents upon membrane depolarization. Voltage sensing is coupled to K(+) electrochemical gradient in an 'ion flux gating' mode where outward but not inward ion flow opens the gate. Converts to voltage-independent 'leak' conductance mode upon stimulation by various stimuli including mechanical membrane stretch, basic pH, temperature and lipids. Homo- and heterodimerizes to form functional channels with distinct regulatory and gating properties. At trigeminal A-beta afferent nerves, the heterodimer of KCNK2/TREK-1 and KCNK4/TRAAK is mostly coexpressed at nodes of Ranvier where it conducts voltage-independent mechanosensitive and thermosensitive currents, allowing rapid action potential repolarization, high speed and high frequence saltatory conduction on myelinated nerves to ensure prompt sensory responses. Permeable to other monovalent cations such as Rb(+) and Cs(+). The polypeptide is Potassium channel subfamily K member 4 (Mus musculus (Mouse)).